Here is a 445-residue protein sequence, read N- to C-terminus: C-terminal-binding protein 2 (445 aa).

Residue R22 is modified to Asymmetric dimethylarginine. NAD(+) contacts are provided by residues S106, 186-191 (IGFGRT), D210, 243-249 (CNLNEHN), 270-272 (AAR), and D296. R272 is a catalytic residue. The active site involves E301. The active-site Proton donor is H321. NAD(+) is bound at residue 321-324 (HTAW). Positions 414 to 445 (THNLPTVAHPSQAPSPNQPTKHGDNREHPNEQ) are disordered. At S428 the chain carries Phosphoserine. The span at 434–445 (KHGDNREHPNEQ) shows a compositional bias: basic and acidic residues.

It belongs to the D-isomer specific 2-hydroxyacid dehydrogenase family. As to quaternary structure, can form homodimers or heterodimers of CTBP1 and CTBP2. Interacts with HIPK2 and ZNF217. Interacts with PRDM16; represses white adipose tissue (WAT)-specific genes expression. Interacts with PNN, NRIP1 and WIZ. Interacts with MCRIP1. In terms of assembly, (Microbial infection) Interacts with human adenovirus 5 E1A protein; this interaction seems to potentiate viral replication. In terms of tissue distribution, ubiquitous. Highest levels in heart, skeletal muscle, and pancreas.

The protein resides in the nucleus. Its subcellular location is the synapse. In terms of biological role, corepressor targeting diverse transcription regulators. Functions in brown adipose tissue (BAT) differentiation. Isoform 2 probably acts as a scaffold for specialized synapses. The protein is C-terminal-binding protein 2 (CTBP2) of Homo sapiens (Human).